The primary structure comprises 110 residues: Cytochrome c (110 aa).

4 residues coordinate heme c: C21, C24, H25, and M87.

It belongs to the cytochrome c family. Post-translationally, binds 1 heme c group covalently per subunit.

Its subcellular location is the mitochondrion intermembrane space. Functionally, electron carrier protein. The oxidized form of the cytochrome c heme group can accept an electron from the heme group of the cytochrome c1 subunit of cytochrome reductase. Cytochrome c then transfers this electron to the cytochrome oxidase complex, the final protein carrier in the mitochondrial electron-transport chain. This Kluyveromyces lactis (strain ATCC 8585 / CBS 2359 / DSM 70799 / NBRC 1267 / NRRL Y-1140 / WM37) (Yeast) protein is Cytochrome c (CYCK).